Reading from the N-terminus, the 553-residue chain is Arginine--tRNA ligase (553 aa).

A 'HIGH' region motif is present at residues 130–140 (ANPTGDLHIGH).

It belongs to the class-I aminoacyl-tRNA synthetase family. Monomer.

It localises to the cytoplasm. It catalyses the reaction tRNA(Arg) + L-arginine + ATP = L-arginyl-tRNA(Arg) + AMP + diphosphate. The polypeptide is Arginine--tRNA ligase (Staphylococcus aureus (strain USA300 / TCH1516)).